The primary structure comprises 751 residues: Ribosome biogenesis protein ERB1 (751 aa).

2 disordered regions span residues 1-140 and 289-336; these read MALT…GNVP and SEPS…DPED. Composition is skewed to acidic residues over residues 34–92 and 119–129; these read LTDE…SDSD and IEPDYDSDSST. Residues 294-305 are compositionally biased toward pro residues; sequence SQPPPLPAPKRP. Residues 323–336 show a composition bias toward basic and acidic residues; sequence EEEKQEWLKQDPED. WD repeat units lie at residues 410-449, 536-580, 582-621, 622-661, 665-704, and 720-751; these read HPKG…EIRR, PSSG…APFK, IKGA…KTLQ, PGIR…KPYK, YHSR…DLMT, and TDGL…VWCS.

The protein belongs to the WD repeat BOP1/ERB1 family. Component of the NOP7 complex, composed of ERB1, NOP7 and YTM1. The complex is held together by ERB1, which interacts with NOP7 via its N-terminal domain and with YTM1 via a high-affinity interaction between the seven-bladed beta-propeller domains of the 2 proteins. The NOP7 complex associates with the 66S pre-ribosome.

The protein localises to the nucleus. It is found in the nucleolus. It localises to the nucleoplasm. Functionally, component of the NOP7 complex, which is required for maturation of the 25S and 5.8S ribosomal RNAs and formation of the 60S ribosome. The protein is Ribosome biogenesis protein ERB1 of Coprinopsis cinerea (strain Okayama-7 / 130 / ATCC MYA-4618 / FGSC 9003) (Inky cap fungus).